Consider the following 348-residue polypeptide: DnaJ homolog subfamily B member 5 (348 aa).

A J domain is found at 4 to 68 (DYYKILGIPS…KKRGLYDQYG (65 aa)).

This is DnaJ homolog subfamily B member 5 (DNAJB5) from Bos taurus (Bovine).